Consider the following 361-residue polypeptide: Peptide chain release factor 1 (361 aa).

Glutamine 240 carries the N5-methylglutamine modification.

Belongs to the prokaryotic/mitochondrial release factor family. In terms of processing, methylated by PrmC. Methylation increases the termination efficiency of RF1.

It is found in the cytoplasm. Its function is as follows. Peptide chain release factor 1 directs the termination of translation in response to the peptide chain termination codons UAG and UAA. In Mycobacterium leprae (strain Br4923), this protein is Peptide chain release factor 1.